A 292-amino-acid polypeptide reads, in one-letter code: MATSNSRPHLLQTHKPFSVVLAISITFFLLLLNKVNSAEILSFSFPKFASNQEDLLLQGDALVSSKGELQLTTVENGVPIWNSTGRALYYAPVHIWDKSTGRVASFATSFSFVVKAPVASKSADGIAFFLAPPNNQIQGPGGGHLGLFHSSGYNSSYQIIAVDFDTHINAWDPNTRHIGIDVNSINSTKTVTWGWQNGEVANVLISYQAATETLTVSLTYPSSQTSYILSAAVDLKSILPEWVRVGFTAATGLTTQYVETHDVLSWSFTSTLETGDCGAKDDNVHLVSYAFI.

A signal peptide spans 1-37; it reads MATSNSRPHLLQTHKPFSVVLAISITFFLLLLNKVNS. N-linked (GlcNAc...) asparagine glycans are attached at residues Asn82 and Asn154. The Mn(2+) site is built by Asp163 and Asp165. Ca(2+) contacts are provided by Asp165, His167, Asn169, and Asp172. Mn(2+)-binding residues include Asp172 and His177. N-linked (GlcNAc...) asparagine glycosylation is present at Asn186.

This sequence belongs to the leguminous lectin family.

Functionally, mannose/glucose-specific lectin. This chain is Seed lectin, found in Styphnolobium japonicum (Japanese pagoda tree).